The primary structure comprises 76 residues: Conotoxin Cal5a L3 (76 aa).

Positions 1-22 (MRFYIGLMAALMLTSVLRTDSA) are cleaved as a signal peptide. Positions 23–42 (SVGQTGTKSELAVIERVIRQ) are excised as a propeptide. Position 50 is a 4-hydroxyproline (Pro50). Pro58, Pro62, and Pro64 each carry 4-hydroxyproline; partial.

Belongs to the conotoxin T superfamily. Post-translationally, contains 2 disulfide bonds that can be either 'C1-C3, C2-C4' or 'C1-C4, C2-C3', since these disulfide connectivities have been observed for conotoxins with cysteine framework V (for examples, see AC P0DQQ7 and AC P81755). In terms of tissue distribution, expressed by the venom duct.

It localises to the secreted. In terms of biological role, probable neurotoxin with unknown target. Possibly targets ion channels. This chain is Conotoxin Cal5a L3, found in Californiconus californicus (California cone).